The primary structure comprises 142 residues: Large ribosomal subunit protein uL11 (142 aa).

Belongs to the universal ribosomal protein uL11 family. In terms of assembly, part of the ribosomal stalk of the 50S ribosomal subunit. Interacts with L10 and the large rRNA to form the base of the stalk. L10 forms an elongated spine to which L12 dimers bind in a sequential fashion forming a multimeric L10(L12)X complex. Post-translationally, one or more lysine residues are methylated.

Forms part of the ribosomal stalk which helps the ribosome interact with GTP-bound translation factors. This Vibrio cholerae serotype O1 (strain ATCC 39541 / Classical Ogawa 395 / O395) protein is Large ribosomal subunit protein uL11.